The sequence spans 74 residues: Large ribosomal subunit protein uL30 (74 aa).

This sequence belongs to the universal ribosomal protein uL30 family. As to quaternary structure, part of the 50S ribosomal subunit.

The sequence is that of Large ribosomal subunit protein uL30 from Micrococcus luteus (strain ATCC 4698 / DSM 20030 / JCM 1464 / CCM 169 / CCUG 5858 / IAM 1056 / NBRC 3333 / NCIMB 9278 / NCTC 2665 / VKM Ac-2230) (Micrococcus lysodeikticus).